The primary structure comprises 172 residues: Protein LOL2 (172 aa).

Putative zinc finger regions lie at residues Gln-4 to Thr-34, His-44 to Val-74, and His-82 to Thr-112.

It is found in the nucleus. Its function is as follows. Putative zinc finger that may be involved in programmed cell death and defense response. This Oryza sativa subsp. japonica (Rice) protein is Protein LOL2 (LOL2).